A 402-amino-acid polypeptide reads, in one-letter code: Flavohemoprotein (402 aa).

In terms of domain architecture, Globin spans M1–R138. A heme b-binding site is contributed by H85. Active-site charge relay system residues include Y95 and E137. The reductase stretch occupies residues G149–A402. Residues T152–D261 form the FAD-binding FR-type domain. FAD-binding positions include Y190 and R206 to S209. G274–P279 serves as a coordination point for NADP(+). V395–T398 lines the FAD pocket.

It belongs to the globin family. Two-domain flavohemoproteins subfamily. This sequence in the C-terminal section; belongs to the flavoprotein pyridine nucleotide cytochrome reductase family. Heme b is required as a cofactor. FAD serves as cofactor.

The catalysed reaction is 2 nitric oxide + NADPH + 2 O2 = 2 nitrate + NADP(+) + H(+). It catalyses the reaction 2 nitric oxide + NADH + 2 O2 = 2 nitrate + NAD(+) + H(+). Is involved in NO detoxification in an aerobic process, termed nitric oxide dioxygenase (NOD) reaction that utilizes O(2) and NAD(P)H to convert NO to nitrate, which protects the bacterium from various noxious nitrogen compounds. Therefore, plays a central role in the inducible response to nitrosative stress. This chain is Flavohemoprotein, found in Bordetella pertussis (strain Tohama I / ATCC BAA-589 / NCTC 13251).